The sequence spans 530 residues: UDP-glucuronosyltransferase 2B14 (530 aa).

Residues 1 to 24 (MSVKHVSVLLLLLQLSCCFRTGSC) form the signal peptide. N134 and N316 each carry an N-linked (GlcNAc...) asparagine glycan. Residues 494–510 (VVGFLVSCAAFLIFLVI) form a helical membrane-spanning segment.

This sequence belongs to the UDP-glycosyltransferase family.

It is found in the microsome membrane. Its subcellular location is the endoplasmic reticulum membrane. It carries out the reaction glucuronate acceptor + UDP-alpha-D-glucuronate = acceptor beta-D-glucuronoside + UDP + H(+). Its function is as follows. UDPGT is of major importance in the conjugation and subsequent elimination of potentially toxic xenobiotics and endogenous compounds. In Oryctolagus cuniculus (Rabbit), this protein is UDP-glucuronosyltransferase 2B14 (UGT2B14).